The sequence spans 206 residues: Small ribosomal subunit protein uS4A (206 aa).

Positions 98-163 (MRLDNVVYRL…SERFKMFAEN (66 aa)) constitute an S4 RNA-binding domain.

This sequence belongs to the universal ribosomal protein uS4 family. As to quaternary structure, part of the 30S ribosomal subunit. Contacts protein S5. The interaction surface between S4 and S5 is involved in control of translational fidelity.

Its function is as follows. One of the primary rRNA binding proteins, it binds directly to 16S rRNA where it nucleates assembly of the body of the 30S subunit. With S5 and S12 plays an important role in translational accuracy. The polypeptide is Small ribosomal subunit protein uS4A (Clostridium perfringens (strain SM101 / Type A)).